The sequence spans 156 residues: S-ribosylhomocysteine lyase (156 aa).

Residues His-56, His-60, and Cys-123 each contribute to the Fe cation site.

The protein belongs to the LuxS family. Homodimer. Requires Fe cation as cofactor.

It catalyses the reaction S-(5-deoxy-D-ribos-5-yl)-L-homocysteine = (S)-4,5-dihydroxypentane-2,3-dione + L-homocysteine. Its function is as follows. Involved in the synthesis of autoinducer 2 (AI-2) which is secreted by bacteria and is used to communicate both the cell density and the metabolic potential of the environment. The regulation of gene expression in response to changes in cell density is called quorum sensing. Catalyzes the transformation of S-ribosylhomocysteine (RHC) to homocysteine (HC) and 4,5-dihydroxy-2,3-pentadione (DPD). The chain is S-ribosylhomocysteine lyase from Staphylococcus aureus (strain Mu3 / ATCC 700698).